The following is a 193-amino-acid chain: dTTP/UTP pyrophosphatase (193 aa).

The active-site Proton acceptor is the aspartate 71.

Belongs to the Maf family. YhdE subfamily. The cofactor is a divalent metal cation.

It localises to the cytoplasm. The catalysed reaction is dTTP + H2O = dTMP + diphosphate + H(+). It catalyses the reaction UTP + H2O = UMP + diphosphate + H(+). Its function is as follows. Nucleoside triphosphate pyrophosphatase that hydrolyzes dTTP and UTP. May have a dual role in cell division arrest and in preventing the incorporation of modified nucleotides into cellular nucleic acids. The protein is dTTP/UTP pyrophosphatase of Dictyoglomus thermophilum (strain ATCC 35947 / DSM 3960 / H-6-12).